We begin with the raw amino-acid sequence, 577 residues long: Sulfite reductase [NADPH] hemoprotein beta-component (577 aa).

Residues Cys440, Cys446, Cys486, and Cys490 each coordinate [4Fe-4S] cluster. Cys490 is a binding site for siroheme.

This sequence belongs to the nitrite and sulfite reductase 4Fe-4S domain family. Alpha(8)-beta(8). The alpha component is a flavoprotein, the beta component is a hemoprotein. It depends on siroheme as a cofactor. The cofactor is [4Fe-4S] cluster.

The enzyme catalyses hydrogen sulfide + 3 NADP(+) + 3 H2O = sulfite + 3 NADPH + 4 H(+). It participates in sulfur metabolism; hydrogen sulfide biosynthesis; hydrogen sulfide from sulfite (NADPH route): step 1/1. Its function is as follows. Component of the sulfite reductase complex that catalyzes the 6-electron reduction of sulfite to sulfide. This is one of several activities required for the biosynthesis of L-cysteine from sulfate. This is Sulfite reductase [NADPH] hemoprotein beta-component from Vibrio cholerae serotype O1 (strain ATCC 39315 / El Tor Inaba N16961).